The chain runs to 204 residues: MQDLKTSLVEVFGKTNLVESFDELTLTVGSQNIIKTCLKLRDFFSFDTLIDLCGVDYLTYGQSDWNGNASASGFSRGRSHQGLKDIHEERFAVVYHLLSVSKNKRIRVKSFVDEVEPIIKSVTDIWASADWYEREAFDLMGILFENHTDLRRILTDYGFTGHPLRKDFPMIGEVEMRYDEDLCRVIYEKVSIEPNVNVPRVIRK.

This sequence belongs to the complex I 30 kDa subunit family. In terms of assembly, NDH-1 is composed of 14 different subunits. Subunits NuoB, C, D, E, F, and G constitute the peripheral sector of the complex.

It localises to the cell inner membrane. The enzyme catalyses a quinone + NADH + 5 H(+)(in) = a quinol + NAD(+) + 4 H(+)(out). Its function is as follows. NDH-1 shuttles electrons from NADH, via FMN and iron-sulfur (Fe-S) centers, to quinones in the respiratory chain. The immediate electron acceptor for the enzyme in this species is believed to be ubiquinone. Couples the redox reaction to proton translocation (for every two electrons transferred, four hydrogen ions are translocated across the cytoplasmic membrane), and thus conserves the redox energy in a proton gradient. This chain is NADH-quinone oxidoreductase subunit C, found in Vesicomyosocius okutanii subsp. Calyptogena okutanii (strain HA).